Consider the following 174-residue polypeptide: Shikimate kinase 2 (174 aa).

12-17 (GCGKTT) provides a ligand contact to ATP. Mg(2+)-binding residues include Thr-16 and Asp-32. Positions 34, 58, and 79 each coordinate substrate. An LID domain region spans residues 112–126 (QAAPEEDLRPTLTGK). Residue Arg-120 participates in ATP binding. Residue Arg-139 coordinates substrate.

This sequence belongs to the shikimate kinase family. AroL subfamily. In terms of assembly, monomer. It depends on Mg(2+) as a cofactor.

It localises to the cytoplasm. The catalysed reaction is shikimate + ATP = 3-phosphoshikimate + ADP + H(+). It participates in metabolic intermediate biosynthesis; chorismate biosynthesis; chorismate from D-erythrose 4-phosphate and phosphoenolpyruvate: step 5/7. Catalyzes the specific phosphorylation of the 3-hydroxyl group of shikimic acid using ATP as a cosubstrate. The polypeptide is Shikimate kinase 2 (Escherichia coli O1:K1 / APEC).